We begin with the raw amino-acid sequence, 397 residues long: ATP-dependent RNA helicase eIF4A (397 aa).

The Q motif signature appears at 23 to 51 (YKFDDLNLKPNIVRGIFGYGYETPSAIQQ). Residues 54 to 224 (ILPITEGRDV…TKFMNNPVRI (171 aa)) enclose the Helicase ATP-binding domain. 67 to 74 (AQSGTGKT) is a binding site for ATP. Positions 172–175 (DEAD) match the DEAD box motif. One can recognise a Helicase C-terminal domain in the interval 235-396 (GIKQFYINVE…EMPADIGALF (162 aa)).

Belongs to the DEAD box helicase family. eIF4A subfamily. As to quaternary structure, component of the eIF4F complex, which composition varies with external and internal environmental conditions. It is composed of at least eIF4A, eIF4E and eIF4G.

The protein localises to the cytoplasm. It carries out the reaction ATP + H2O = ADP + phosphate + H(+). ATP-dependent RNA helicase which is a subunit of the eIF4F complex involved in cap recognition and is required for mRNA binding to ribosome. In the current model of translation initiation, eIF4A unwinds RNA secondary structures in the 5'-UTR of mRNAs which is necessary to allow efficient binding of the small ribosomal subunit, and subsequent scanning for the initiator codon. The sequence is that of ATP-dependent RNA helicase eIF4A (TIF1) from Candida albicans (strain SC5314 / ATCC MYA-2876) (Yeast).